The chain runs to 336 residues: Fructose-1,6-bisphosphatase class 1 (336 aa).

Residues glutamate 90, aspartate 112, leucine 114, and aspartate 115 each contribute to the Mg(2+) site. Substrate contacts are provided by residues aspartate 115–serine 118, asparagine 211, and lysine 277. Glutamate 283 is a Mg(2+) binding site.

It belongs to the FBPase class 1 family. Homotetramer. It depends on Mg(2+) as a cofactor.

Its subcellular location is the cytoplasm. The catalysed reaction is beta-D-fructose 1,6-bisphosphate + H2O = beta-D-fructose 6-phosphate + phosphate. The protein operates within carbohydrate biosynthesis; gluconeogenesis. This is Fructose-1,6-bisphosphatase class 1 from Stutzerimonas stutzeri (strain A1501) (Pseudomonas stutzeri).